The primary structure comprises 553 residues: Pumilio domain-containing protein 5 (553 aa).

Pumilio repeat units follow at residues 146–184, 185–223, 224–260, 261–296, 297–335, 347–384, 386–421, and 432–472; these read DVVS…VLFD, KLTE…RLVR, KMCD…KLVE, KISS…SFFV, KFLC…HCFN, SVAR…TIIE, CLLR…EMMD, and ETNR…KMVA. The RNA-binding stretch occupies residues 499–514; the sequence is FSSGKKIIESLQKLNV.

Detected in differentiating oocytes with highest levels observed in developing ooctyes in the distal portion of the proximal gonad.

It is found in the cytoplasm. The protein localises to the P-body. RNA-binding protein that binds to the consensus sequence 5'-CUCUGUAUCUUGU-3' in mRNA 3'-UTRs and modulates mRNA expression and stability. Functions redundantly with puf-6 and puf-7 in oocyte formation and organization, early embryonic cell divisions, and repression of expression of glp-1 and other maternal mRNAs in late oogenesis. This is Pumilio domain-containing protein 5 from Caenorhabditis elegans.